The following is a 218-amino-acid chain: Glycerol-3-phosphate acyltransferase (218 aa).

A run of 5 helical transmembrane segments spans residues 10 to 30 (LTLGIAIVGGYLLGSIPFGLI), 60 to 80 (DLAAITLLGDAGKGVVAVLLA), 88 to 108 (PAIIALAGGSAFLGHLFPVWL), 125 to 145 (SAAWPVGVAAGATWLAMAFLF), and 165 to 185 (AFDQPYPFMGLCLFMAVLIFI).

Belongs to the PlsY family. In terms of assembly, probably interacts with PlsX.

Its subcellular location is the cell inner membrane. It catalyses the reaction an acyl phosphate + sn-glycerol 3-phosphate = a 1-acyl-sn-glycero-3-phosphate + phosphate. It functions in the pathway lipid metabolism; phospholipid metabolism. Catalyzes the transfer of an acyl group from acyl-phosphate (acyl-PO(4)) to glycerol-3-phosphate (G3P) to form lysophosphatidic acid (LPA). This enzyme utilizes acyl-phosphate as fatty acyl donor, but not acyl-CoA or acyl-ACP. The sequence is that of Glycerol-3-phosphate acyltransferase from Caulobacter vibrioides (strain ATCC 19089 / CIP 103742 / CB 15) (Caulobacter crescentus).